Reading from the N-terminus, the 96-residue chain is UPF0235 protein MK0273 (96 aa).

It belongs to the UPF0235 family.

The sequence is that of UPF0235 protein MK0273 from Methanopyrus kandleri (strain AV19 / DSM 6324 / JCM 9639 / NBRC 100938).